The chain runs to 396 residues: Probable sugar efflux transporter (396 aa).

Transmembrane regions (helical) follow at residues 15–35, 50–70, 81–101, 103–123, 136–156, 170–190, 209–229, 246–266, 275–295, 299–319, 333–353, and 364–384; these read VVTL…PVGL, VGIM…PFML, LICL…SWSF, VLVI…SITA, AQAL…GLPL, FFAI…LLPL, PALM…YTAY, FATA…VIFG, TLVS…LPAA, IHLG…GLGM, VAMA…ALVG, and MIGY…IIIF.

Belongs to the major facilitator superfamily. SotB (TC 2.A.1.2) family.

It localises to the cell inner membrane. Involved in the efflux of sugars. The physiological role may be the reduction of the intracellular concentration of toxic sugars or sugar metabolites. This Escherichia coli (strain SMS-3-5 / SECEC) protein is Probable sugar efflux transporter.